The primary structure comprises 552 residues: MERFLRKYNISGDYANATRTFLAISPQWTCSHLKRNCLSNGMCAKQNFERAMIAATDAEEPIKAFRLIELAKEAMYDRETVWLQCFKSFSQPYEEDIEGKIKRCGAQLLEDYRKSGMMEEAIKQSALINSERVRLDDSLSAIPYIYVPIKEGQIVNPTFISRYRQIAYYFYNPDAADDWIDPNLFGVRGQHHQIKREVERQINTCPYTGYKGGIFQVMYLPIQLINFLRMDDFAKHFNRYASMAIQQYLRVGYLEEIRYVQQLFGKVPSGEFPLHQMMLMRRDFPTRDRNIVEARVKRSGDENWQSWLLPMVLVREGLDQQEKWEWLLEYMDRKHICQLCYLKHSKQIQTCSVIDVRASELIGCSPFRTVKIEEHVGNEPVFKTKLIRDQQIGRIGDHYYTTSCYTGAEALVTTAIHIHRWIRGCGIWNDEGWQEGVFMLGRVLLRWELTKAQRSALLRLFCFVCYGYAPRADGTVPDWNNLGSFLDIILKGPELSEDEDERAYATMFEMVRCIITLCYAEKVHFAGFTAPACESGEVINLAARMSQMWMEY.

This sequence belongs to the orbivirus non-structural protein NS1 family.

The polypeptide is Non-structural protein NS1 (Segment-5) (Antilocapra americana (Pronghorn)).